The following is a 179-amino-acid chain: Apoptosis regulator Bcl-2 homolog (179 aa).

Residues 76 to 95 carry the BH1 motif; sequence ELFKDLINWGRICGFIVFSA. A BH2 motif is present at residues 126–141; that stretch reads PWMISHGGQEEFLAFS.

This sequence belongs to the Bcl-2 family. In terms of assembly, interacts with host BECN1 (via BH3 homology domain); this interaction allows the virus to inhibit BECN1, and thus autophagy. Interacts with host BID. Interacts with host BAX.

The protein localises to the host mitochondrion. Its subcellular location is the host endoplasmic reticulum. Its function is as follows. Suppresses apoptosis in host cell to promote the viral replication. Has the ability to potentially bind to all the members of the proapoptotic Bcl-2 family. Inhibits autophagy by interacting with host Beclin 1 (BECN1). The polypeptide is Apoptosis regulator Bcl-2 homolog (Ornithodoros (relapsing fever ticks)).